We begin with the raw amino-acid sequence, 302 residues long: Sulfate adenylyltransferase subunit 2 (302 aa).

Belongs to the PAPS reductase family. CysD subfamily. Heterodimer composed of CysD, the smaller subunit, and CysN.

The catalysed reaction is sulfate + ATP + H(+) = adenosine 5'-phosphosulfate + diphosphate. The protein operates within sulfur metabolism; hydrogen sulfide biosynthesis; sulfite from sulfate: step 1/3. Its function is as follows. With CysN forms the ATP sulfurylase (ATPS) that catalyzes the adenylation of sulfate producing adenosine 5'-phosphosulfate (APS) and diphosphate, the first enzymatic step in sulfur assimilation pathway. APS synthesis involves the formation of a high-energy phosphoric-sulfuric acid anhydride bond driven by GTP hydrolysis by CysN coupled to ATP hydrolysis by CysD. The chain is Sulfate adenylyltransferase subunit 2 from Shewanella halifaxensis (strain HAW-EB4).